A 306-amino-acid polypeptide reads, in one-letter code: Recombination-associated protein RdgC (306 aa).

This sequence belongs to the RdgC family.

Its subcellular location is the cytoplasm. It localises to the nucleoid. May be involved in recombination. This chain is Recombination-associated protein RdgC, found in Pseudomonas putida (strain ATCC 47054 / DSM 6125 / CFBP 8728 / NCIMB 11950 / KT2440).